The primary structure comprises 364 residues: Developmentally-regulated GTP-binding protein 2 (364 aa).

Lysine 21 is subject to (3S)-3-hydroxylysine. The OBG-type G domain occupies 63-288 (ARVALIGFPS…LLEMLWEYLA (226 aa)). Residues 69–76 (GFPSVGKS), 94–98 (FTTLT), 115–118 (DLPG), 246–249 (NKID), and 269–271 (SCG) contribute to the GTP site. Residues serine 76 and threonine 96 each contribute to the Mg(2+) site. A TGS domain is found at 288 to 363 (ALTCIYTKKR…EHEDVIQIVK (76 aa)).

This sequence belongs to the TRAFAC class OBG-HflX-like GTPase superfamily. OBG GTPase family. Interacts with RWDD1; this interaction confers protection to polyubiquitination and proteolytic degradation. Interacts with JMJD7; this interaction is direct. Requires Mg(2+) as cofactor. In terms of processing, polyubiquitinated. Post-translationally, hydroxylated (with S stereochemistry) at C-3 of Lys-21 by JMJD7. Fairly high levels in liver, heart, kidney, and brain. Very low levels in lung, spleen, testis and skeletal muscle.

It localises to the nucleus. It is found in the cytoplasm. It catalyses the reaction GTP + H2O = GDP + phosphate + H(+). In terms of biological role, catalyzes the conversion of GTP to GDP through hydrolysis of the gamma-phosphate bond in GTP. When hydroxylated at C-3 of 'Lys-21' by JMJD7, may bind to RNA and play a role in translation. This is Developmentally-regulated GTP-binding protein 2 (Drg2) from Mus musculus (Mouse).